Consider the following 329-residue polypeptide: tRNA dimethylallyltransferase (329 aa).

24-31 contacts ATP; it reads GSTGIGKT. Substrate is bound at residue 26 to 31; sequence TGIGKT. Residues 49-52 are interaction with substrate tRNA; that stretch reads DSMQ.

The protein belongs to the IPP transferase family. As to quaternary structure, monomer. Mg(2+) serves as cofactor.

It carries out the reaction adenosine(37) in tRNA + dimethylallyl diphosphate = N(6)-dimethylallyladenosine(37) in tRNA + diphosphate. In terms of biological role, catalyzes the transfer of a dimethylallyl group onto the adenine at position 37 in tRNAs that read codons beginning with uridine, leading to the formation of N6-(dimethylallyl)adenosine (i(6)A). The polypeptide is tRNA dimethylallyltransferase (Methylacidiphilum infernorum (isolate V4) (Methylokorus infernorum (strain V4))).